The sequence spans 277 residues: Pantothenate synthetase (277 aa).

ATP is bound at residue 26-33; sequence MGNLHEGH. Histidine 33 functions as the Proton donor in the catalytic mechanism. Glutamine 57 contacts (R)-pantoate. Glutamine 57 provides a ligand contact to beta-alanine. 144-147 provides a ligand contact to ATP; the sequence is GKKD. (R)-pantoate is bound at residue glutamine 150. ATP is bound by residues valine 173 and 181 to 184; that span reads LSSR.

This sequence belongs to the pantothenate synthetase family. In terms of assembly, homodimer.

It localises to the cytoplasm. It catalyses the reaction (R)-pantoate + beta-alanine + ATP = (R)-pantothenate + AMP + diphosphate + H(+). Its pathway is cofactor biosynthesis; (R)-pantothenate biosynthesis; (R)-pantothenate from (R)-pantoate and beta-alanine: step 1/1. In terms of biological role, catalyzes the condensation of pantoate with beta-alanine in an ATP-dependent reaction via a pantoyl-adenylate intermediate. The protein is Pantothenate synthetase of Paraburkholderia phymatum (strain DSM 17167 / CIP 108236 / LMG 21445 / STM815) (Burkholderia phymatum).